The chain runs to 61 residues: Small ribosomal subunit protein uS14B (61 aa).

Cys24, Cys27, Cys40, and Cys43 together coordinate Zn(2+).

Belongs to the universal ribosomal protein uS14 family. Zinc-binding uS14 subfamily. As to quaternary structure, part of the 30S ribosomal subunit. Contacts proteins S3 and S10. Zn(2+) is required as a cofactor.

Its function is as follows. Binds 16S rRNA, required for the assembly of 30S particles and may also be responsible for determining the conformation of the 16S rRNA at the A site. The chain is Small ribosomal subunit protein uS14B from Bacillus licheniformis (strain ATCC 14580 / DSM 13 / JCM 2505 / CCUG 7422 / NBRC 12200 / NCIMB 9375 / NCTC 10341 / NRRL NRS-1264 / Gibson 46).